Here is a 290-residue protein sequence, read N- to C-terminus: Acetyl-coenzyme A carboxylase carboxyl transferase subunit beta (290 aa).

Positions 27 to 290 (LWIKCPSCEA…LTRQPADAVA (264 aa)) constitute a CoA carboxyltransferase N-terminal domain. Zn(2+) contacts are provided by cysteine 31, cysteine 34, cysteine 50, and cysteine 53. The C4-type zinc finger occupies 31 to 53 (CPSCEAVLYRNDVEANLHVCPKC).

Belongs to the AccD/PCCB family. Acetyl-CoA carboxylase is a heterohexamer composed of biotin carboxyl carrier protein (AccB), biotin carboxylase (AccC) and two subunits each of ACCase subunit alpha (AccA) and ACCase subunit beta (AccD). Zn(2+) is required as a cofactor.

The protein localises to the cytoplasm. The catalysed reaction is N(6)-carboxybiotinyl-L-lysyl-[protein] + acetyl-CoA = N(6)-biotinyl-L-lysyl-[protein] + malonyl-CoA. The protein operates within lipid metabolism; malonyl-CoA biosynthesis; malonyl-CoA from acetyl-CoA: step 1/1. Component of the acetyl coenzyme A carboxylase (ACC) complex. Biotin carboxylase (BC) catalyzes the carboxylation of biotin on its carrier protein (BCCP) and then the CO(2) group is transferred by the transcarboxylase to acetyl-CoA to form malonyl-CoA. The sequence is that of Acetyl-coenzyme A carboxylase carboxyl transferase subunit beta from Paraburkholderia phymatum (strain DSM 17167 / CIP 108236 / LMG 21445 / STM815) (Burkholderia phymatum).